A 320-amino-acid polypeptide reads, in one-letter code: Aristolochene synthase (320 aa).

The segment covering 1–14 (MKKPNGTNGASSSL) has biased composition (polar residues). A disordered region spans residues 1–20 (MKKPNGTNGASSSLEPPPST). Mg(2+) is bound by residues Asp-90, Asn-219, Ser-223, and Glu-227. 2 residues coordinate (2E,6E)-farnesyl diphosphate: Arg-314 and Tyr-315.

The protein belongs to the terpene synthase family. Homodimer. Mg(2+) serves as cofactor.

The catalysed reaction is (2E,6E)-farnesyl diphosphate = (+)-aristolochene + diphosphate. Its pathway is sesquiterpene biosynthesis; aristolochene biosynthesis; aristolochene from farnesyl diphosphate: step 1/1. Catalyzes the cyclization of trans,trans-farnesyl diphosphate (FPP) to the bicyclic sesquiterpene aristolochene. Produces germacrene A as an enzyme-bound intermediate that is not released by the enzyme, but is further cyclized to produce aristolochene. Aristolochene is the likely parent compound for a number of sesquiterpenoid toxins produced by filamentous fungi. This Aspergillus terreus protein is Aristolochene synthase (Ari1).